The sequence spans 104 residues: MAAKIRKGDKVIVLSGRDKGRTGEVFEVRPAEGRALVRGVNIVKRHQKQTQNQEGGILSKESPIDLSNIAIVGKDGKPTRVGFKIQADGTKVRVAKRSGAEIDG.

Belongs to the universal ribosomal protein uL24 family. In terms of assembly, part of the 50S ribosomal subunit.

Functionally, one of two assembly initiator proteins, it binds directly to the 5'-end of the 23S rRNA, where it nucleates assembly of the 50S subunit. In terms of biological role, one of the proteins that surrounds the polypeptide exit tunnel on the outside of the subunit. The chain is Large ribosomal subunit protein uL24 from Nitrobacter winogradskyi (strain ATCC 25391 / DSM 10237 / CIP 104748 / NCIMB 11846 / Nb-255).